Reading from the N-terminus, the 130-residue chain is Lysozyme C, kidney isozyme (130 aa).

The C-type lysozyme domain occupies 1-130; that stretch reads KVFERCELAR…LTSYIQGCGV (130 aa). 4 disulfides stabilise this stretch: C6–C128, C30–C116, C65–C81, and C77–C95. Residues E35 and D53 contribute to the active site.

It belongs to the glycosyl hydrolase 22 family. As to quaternary structure, monomer.

It is found in the secreted. It catalyses the reaction Hydrolysis of (1-&gt;4)-beta-linkages between N-acetylmuramic acid and N-acetyl-D-glucosamine residues in a peptidoglycan and between N-acetyl-D-glucosamine residues in chitodextrins.. Functionally, lysozymes have primarily a bacteriolytic function; those in tissues and body fluids are associated with the monocyte-macrophage system and enhance the activity of immunoagents. This chain is Lysozyme C, kidney isozyme, found in Ovis aries (Sheep).